The sequence spans 502 residues: MNTIFTIILTITILVLSLILKDLLFEGRIKKINKLIPGPSTIPVFGNLLQINAKDFPKSVNDFYERYGKVFRLRLGSVEIVVLTGPEVIDECFNKKHREIFKERYIKFSRFLGKDYNIFSSNGDYHYVLRGILTSEITTRKLNNGRLESNKFILEMFSNLCKDNKETLVKNTPNQIRILAVKLILNFTLGIEENDETILIIVEKIKCIFEAAGLLIYSDYLPFLFPLDIKSMSKNDIISSYFFIKDFIGIKLDAIKIKYEKENELKNETTDETSSKLNNIPIIENYYKNYLDGSIHYDSILFSISDIIFAAVDSTSNGFSLLIGQLINKPEIQDKIYEEIMRNDENNNTNNISFADHTKYPYIISVMNESYRYNSSVPITEPNKTTEDVEVNGYKIAKGTMIIKNLRGTHLSKEFWGEDALEFKPERFKNQPLNQKGLFHFGAGARACPGGRFTESFTFTFLVIMLKNFKIVNPTDIPIDVEGEVGLAMQCKPFDALFIKRN.

Residues 4-24 traverse the membrane as a helical segment; sequence IFTIILTITILVLSLILKDLL. Heme is bound at residue Cys-448.

Belongs to the cytochrome P450 family. Requires heme as cofactor.

Its subcellular location is the membrane. The protein is Probable cytochrome P450 514A4 (cyp514A4) of Dictyostelium discoideum (Social amoeba).